The chain runs to 759 residues: MSEKVDVGESVKGDASENAVKEVAERPIVMIDNYDSFTWNVVQYLSNLEKRYPIMVFRNDEITVDELEKLNPLKLVLSPGPGHPARDGGICNEAISRFAGKIPILGVCMGLQCIFETMGGKVDSAGEIIHGKVSKINHDGLGFYQGIPQNISVTRYHSLAGKISSLPDCLDVTSWTENGVIMGARHKKYAIEGVQYHPESILSEYGKEYIQNFLNLTAGTWEENGIVMPTKNNAFNAAMRENSNSVSSTKIRKQESILEKIHAQRLIDIAESKRKPGLSVGDLQTYLNLNIAPPCINFYERLKQSKPALMAEVKRASPSKGDIKLDANAAIQALTYAQVGASVISVLTEPKWFKGSLNDLFVARKAVEHVANRPAILRKDFIIDPYQIMEARLNGADSVLLIVAMLSREQLESLYKFSKSLGMEPLVEVNCAEEMKTAIELGAKVIGVNNRNLHSFEVDLSTTSKLAEMVPDDVILAALSGISSPADVAHYSSQGVSAVLVGESLMRASDPAAFARELLNLSSSEISNGKKTSTPLVKVCGTRSLLAAKTIVESGGDLIGLIFVEKSKRKVDLSVAKEISHFVHTTNRKHISPKKAVTGQSWFDHQYENLASSPHPLLVGVFQNQPLEYIRSIIAEVNLDIVQLHGQEPFEWIHMLDRPVIKVFPLNSSEISRPNYHIVPLIDAYVGGESGGLGKKVDWEAASFIPVSYVLAGGLTPKNVQDAISVSRPAVVDVSSGVETDGKQDLEKIKAFINAVKEL.

The region spanning 27–223 (PIVMIDNYDS…LNLTAGTWEE (197 aa)) is the Glutamine amidotransferase type-1 domain. 80-82 (GPG) is an L-glutamine binding site. Cys-108 (nucleophile; for GATase activity) is an active-site residue. L-glutamine contacts are provided by residues Gln-112 and 158–159 (SL). Active-site for GATase activity residues include His-197 and Glu-199. An indole-3-glycerol phosphate synthase region spans residues 257-519 (ILEKIHAQRL…DPAAFARELL (263 aa)). The interval 536-759 (LVKVCGTRSL…KAFINAVKEL (224 aa)) is N-(5'-phosphoribosyl)anthranilate isomerase.

The catalysed reaction is N-(5-phospho-beta-D-ribosyl)anthranilate = 1-(2-carboxyphenylamino)-1-deoxy-D-ribulose 5-phosphate. It catalyses the reaction 1-(2-carboxyphenylamino)-1-deoxy-D-ribulose 5-phosphate + H(+) = (1S,2R)-1-C-(indol-3-yl)glycerol 3-phosphate + CO2 + H2O. It carries out the reaction chorismate + L-glutamine = anthranilate + pyruvate + L-glutamate + H(+). It participates in amino-acid biosynthesis; L-tryptophan biosynthesis; L-tryptophan from chorismate: step 1/5. Its pathway is amino-acid biosynthesis; L-tryptophan biosynthesis; L-tryptophan from chorismate: step 3/5. The protein operates within amino-acid biosynthesis; L-tryptophan biosynthesis; L-tryptophan from chorismate: step 4/5. Functionally, trifunctional enzyme bearing the Gln amidotransferase (GATase) domain of anthranilate synthase, indole-glycerolphosphate synthase, and phosphoribosylanthranilate isomerase activities. The protein is Multifunctional tryptophan biosynthesis protein (trp1) of Schizosaccharomyces pombe (strain 972 / ATCC 24843) (Fission yeast).